We begin with the raw amino-acid sequence, 2258 residues long: Probable serine/threonine-protein kinase ifkA (2258 aa).

2 disordered regions span residues 43–108 (RVNS…HQMG) and 189–308 (EMNN…KEND). A compositionally biased stretch (low complexity) spans 45-57 (NSSDDINNNNNNN). A compositionally biased stretch (acidic residues) spans 58 to 100 (NDDDDDNDDYDDSDDENSDSDYDDYDDSDDENSDDEFYSDDED). Positions 191 to 301 (NNLTNSNNSN…NKELIDNNNN (111 aa)) are enriched in low complexity. A coiled-coil region spans residues 273–309 (NNNNNISNNKINKINNNNNNKELIDNNNNNKDKENDL). Positions 319-691 (WKKGSCIERK…AGILLKHPFL (373 aa)) constitute a Protein kinase 1 domain. ATP-binding positions include 325–333 (IERKSNYSV) and Lys-348. The disordered stretch occupies residues 358 to 398 (SSSSLTSLSNSNNNNSNNNNNNNNNNNNNNNNNNNNNNNNN). The span at 359 to 398 (SSSLTSLSNSNNNNSNNNNNNNNNNNNNNNNNNNNNNNNN) shows a compositional bias: low complexity. Asp-498 acts as the Proton acceptor in catalysis. Disordered stretches follow at residues 741-768 (KSQTPNNNNDNNNLASSNELLSSSNGSN) and 782-870 (PLAT…MTPL). Over residues 746–768 (NNNNDNNNLASSNELLSSSNGSN) the composition is skewed to low complexity. A compositionally biased stretch (polar residues) spans 782-791 (PLATSSSLDN). Residues 793 to 805 (TPPPSRPISPKPS) show a composition bias toward pro residues. Over residues 841–870 (PQQNFNTPPTTTTTTTTPTATPTTPTMTPL) the composition is skewed to low complexity. The 589-residue stretch at 894–1482 (FEEIEMIGKG…TKQLLESGLL (589 aa)) folds into the Protein kinase 2 domain. ATP is bound by residues 900 to 908 (IGKGGFGVV) and Lys-923. Low complexity predominate over residues 1053–1094 (TLSSSNTSSSSSLLSNNKSKILNTSKSTSTNTSTSTSTSNTN). Residues 1053-1259 (TLSSSNTSSS…SSSRKKPPKE (207 aa)) form a disordered region. Over residues 1095–1106 (KNKKISKKKKSK) the composition is skewed to basic residues. Low complexity predominate over residues 1156–1185 (NNNNNNDNNNNYHSDNESDSFSGSISMSDG). Residues 1206 to 1233 (DENENDDDDEEDDDDEYDEEDDDYETFD) show a composition bias toward acidic residues. The span at 1242-1251 (SNNSKLSTSS) shows a compositional bias: low complexity. Asp-1313 (proton acceptor) is an active-site residue. Disordered regions lie at residues 1343–1370 (KSDDLNSSTSNTANNINLSSSTNSTAQQ) and 2048–2104 (GSGG…QQTS). Low complexity predominate over residues 1347–1368 (LNSSTSNTANNINLSSSTNSTA). Gly residues predominate over residues 2048 to 2072 (GSGGSGGSGGGSSMSSGGGGGGNSN). Residues 2085-2099 (SNQSTSSSGNSNNSN) show a composition bias toward low complexity.

Belongs to the protein kinase superfamily. Ser/Thr protein kinase family.

The enzyme catalyses L-seryl-[protein] + ATP = O-phospho-L-seryl-[protein] + ADP + H(+). The catalysed reaction is L-threonyl-[protein] + ATP = O-phospho-L-threonyl-[protein] + ADP + H(+). Phosphorylates eIF2-alpha, from 1 to 7 hours after the onset of development or during the preaggregation state, resulting in a shift from polysomes to free ribosomes for bulk mRNA. This is Probable serine/threonine-protein kinase ifkA (ifkA) from Dictyostelium discoideum (Social amoeba).